Consider the following 732-residue polypeptide: Copper-transporting ATPase (732 aa).

Residues methionine 1–lysine 88 lie on the Cytoplasmic side of the membrane. The HMA domain maps to threonine 2 to arginine 68. 2 residues coordinate Cu(+): cysteine 13 and cysteine 16. A helical transmembrane segment spans residues leucine 89–leucine 109. The Extracellular segment spans residues proline 110–glycine 122. Residues isoleucine 123 to histidine 142 traverse the membrane as a helical segment. The Cytoplasmic segment spans residues glycine 143–alanine 149. Residues arginine 150 to leucine 170 traverse the membrane as a helical segment. The Extracellular portion of the chain corresponds to valine 171–phenylalanine 187. The chain crosses the membrane as a helical span at residues glutamate 188–lysine 208. Over aspartate 209–lysine 336 the chain is Cytoplasmic. The helical transmembrane segment at valine 337–leucine 359 threads the bilayer. The Extracellular segment spans residues glycine 360–alanine 365. The chain crosses the membrane as a helical span at residues leucine 366 to leucine 383. The Cytoplasmic portion of the chain corresponds to alanine 384–isoleucine 663. Aspartate 421 functions as the 4-aspartylphosphate intermediate in the catalytic mechanism. Residues aspartate 609 and aspartate 613 each contribute to the Mg(2+) site. A helical membrane pass occupies residues lysine 664–glycine 683. Topologically, residues valine 684–proline 694 are extracellular. The helical transmembrane segment at methionine 695–glutamine 713 threads the bilayer. Topologically, residues arginine 714–serine 732 are cytoplasmic.

Belongs to the cation transport ATPase (P-type) (TC 3.A.3) family. Type IB subfamily.

The protein localises to the cell membrane. The catalysed reaction is Cu(+)(in) + ATP + H2O = Cu(+)(out) + ADP + phosphate + H(+). Probably involved in copper export. This Helicobacter felis (strain ATCC 49179 / CCUG 28539 / NCTC 12436 / CS1) protein is Copper-transporting ATPase (copA).